A 565-amino-acid chain; its full sequence is Periplasmic trehalase (565 aa).

Positions methionine 1–alanine 30 are cleaved as a signal peptide. Substrate is bound by residues arginine 152, tryptophan 159 to aspartate 160, asparagine 196, arginine 205 to glutamine 207, arginine 277 to glutamate 279, and glycine 310. Active-site proton donor/acceptor residues include aspartate 312 and glutamate 496. Position 511 (glutamate 511) interacts with substrate. The interval proline 538–proline 565 is disordered. Residues threonine 548–proline 565 show a composition bias toward polar residues.

It belongs to the glycosyl hydrolase 37 family. In terms of assembly, monomer.

The protein resides in the periplasm. The catalysed reaction is alpha,alpha-trehalose + H2O = alpha-D-glucose + beta-D-glucose. Its function is as follows. Provides the cells with the ability to utilize trehalose at high osmolarity by splitting it into glucose molecules that can subsequently be taken up by the phosphotransferase-mediated uptake system. This is Periplasmic trehalase from Escherichia coli (strain K12 / MC4100 / BW2952).